Here is a 446-residue protein sequence, read N- to C-terminus: Exodeoxyribonuclease 7 large subunit (446 aa).

The protein belongs to the XseA family. In terms of assembly, heterooligomer composed of large and small subunits.

It localises to the cytoplasm. It catalyses the reaction Exonucleolytic cleavage in either 5'- to 3'- or 3'- to 5'-direction to yield nucleoside 5'-phosphates.. In terms of biological role, bidirectionally degrades single-stranded DNA into large acid-insoluble oligonucleotides, which are then degraded further into small acid-soluble oligonucleotides. In Streptococcus pneumoniae serotype 19F (strain G54), this protein is Exodeoxyribonuclease 7 large subunit.